We begin with the raw amino-acid sequence, 237 residues long: Large ribosomal subunit protein uL22m (237 aa).

This sequence belongs to the universal ribosomal protein uL22 family.

Its subcellular location is the mitochondrion. The chain is Large ribosomal subunit protein uL22m (mrpl22) from Dictyostelium discoideum (Social amoeba).